A 173-amino-acid polypeptide reads, in one-letter code: Ribosome maturation factor RimM (173 aa).

Residues 95-173 enclose the PRC barrel domain; it reads EGEYYWRQLE…LMVVDWDPDF (79 aa).

This sequence belongs to the RimM family. Binds ribosomal protein uS19.

Its subcellular location is the cytoplasm. Functionally, an accessory protein needed during the final step in the assembly of 30S ribosomal subunit, possibly for assembly of the head region. Essential for efficient processing of 16S rRNA. May be needed both before and after RbfA during the maturation of 16S rRNA. It has affinity for free ribosomal 30S subunits but not for 70S ribosomes. The chain is Ribosome maturation factor RimM from Hahella chejuensis (strain KCTC 2396).